Reading from the N-terminus, the 358-residue chain is Membrane-bound lytic murein transglycosylase C (358 aa).

The N-terminal stretch at methionine 1–serine 16 is a signal peptide. The N-palmitoyl cysteine moiety is linked to residue cysteine 17. Cysteine 17 carries S-diacylglycerol cysteine lipidation.

The protein belongs to the transglycosylase Slt family.

The protein resides in the cell outer membrane. The catalysed reaction is Exolytic cleavage of the (1-&gt;4)-beta-glycosidic linkage between N-acetylmuramic acid (MurNAc) and N-acetylglucosamine (GlcNAc) residues in peptidoglycan, from either the reducing or the non-reducing ends of the peptidoglycan chains, with concomitant formation of a 1,6-anhydrobond in the MurNAc residue.. Functionally, murein-degrading enzyme. May play a role in recycling of muropeptides during cell elongation and/or cell division. In Yersinia pseudotuberculosis serotype O:1b (strain IP 31758), this protein is Membrane-bound lytic murein transglycosylase C.